The primary structure comprises 207 residues: Twist-related protein 1 (207 aa).

Residues 1–18 (MMQDVSSSPVSPADDSLS) are compositionally biased toward low complexity. Residues 1–110 (MMQDVSSSPV…GGGSPQSYEE (110 aa)) are disordered. Positions 34–43 (RGGRKRRSSR) are enriched in basic residues. Composition is skewed to gly residues over residues 46–65 (AGGGAGPGGAAGGGVGGGDE) and 80–104 (GCGGGGSAGGGGGGGGGGSSSGGGS). Residues 113 to 164 (TQRVMANVRERQRTQSLNEAFAALRKIIPTLPSDKLSKIQTLKLAARYIDFL) form the bHLH domain. The segment at 166–196 (QVLQSDELDSKMASCSYVAHERLSYAFSVWR) is sufficient for transactivation activity.

As to quaternary structure, efficient DNA binding requires dimerization with another bHLH protein. Homodimer or heterodimer with E proteins such as TCF3. ID1 binds preferentially to TCF3 but does not interact efficiently with TWIST1 so ID1 levels control the amount of TCF3 available to dimerize with TWIST and thus determine the type of dimer formed.

It localises to the nucleus. Its function is as follows. Acts as a transcriptional regulator. Inhibits myogenesis by sequestrating E proteins, inhibiting trans-activation by MEF2, and inhibiting DNA-binding by MYOD1 through physical interaction. This interaction probably involves the basic domains of both proteins. Also represses expression of pro-inflammatory cytokines such as TNFA and IL1B. Regulates cranial suture patterning and fusion. Activates transcription as a heterodimer with E proteins. Regulates gene expression differentially, depending on dimer composition. Homodimers induce expression of FGFR2 and POSTN while heterodimers repress FGFR2 and POSTN expression and induce THBS1 expression. Heterodimerization is also required for osteoblast differentiation. Represses the activity of the circadian transcriptional activator: NPAS2-BMAL1 heterodimer. The protein is Twist-related protein 1 (TWIST1) of Cebus capucinus (White-faced sapajou).